We begin with the raw amino-acid sequence, 256 residues long: Protein FixA (256 aa).

The protein belongs to the ETF beta-subunit/FixA family. Heterodimer of FixA and FixB.

The protein operates within amine and polyamine metabolism; carnitine metabolism. In terms of biological role, required for anaerobic carnitine reduction. May bring reductant to CaiA. This Escherichia coli O17:K52:H18 (strain UMN026 / ExPEC) protein is Protein FixA.